Consider the following 108-residue polypeptide: Urease subunit beta (108 aa).

It belongs to the urease beta subunit family. As to quaternary structure, heterotrimer of UreA (gamma), UreB (beta) and UreC (alpha) subunits. Three heterotrimers associate to form the active enzyme.

It localises to the cytoplasm. The catalysed reaction is urea + 2 H2O + H(+) = hydrogencarbonate + 2 NH4(+). It functions in the pathway nitrogen metabolism; urea degradation; CO(2) and NH(3) from urea (urease route): step 1/1. The chain is Urease subunit beta from Microcystis aeruginosa (strain NIES-843 / IAM M-2473).